The primary structure comprises 604 residues: UvrABC system protein C (604 aa).

The 78-residue stretch at 15 to 92 folds into the GIY-YIG domain; sequence DLPGCYLMKN…IQKHQPYFNI (78 aa). Positions 197-232 constitute a UVR domain; the sequence is ETVKKQLTKRMDQAAADLEFERAAELRDQLNYIEMT.

It belongs to the UvrC family. As to quaternary structure, interacts with UvrB in an incision complex.

Its subcellular location is the cytoplasm. The UvrABC repair system catalyzes the recognition and processing of DNA lesions. UvrC both incises the 5' and 3' sides of the lesion. The N-terminal half is responsible for the 3' incision and the C-terminal half is responsible for the 5' incision. This chain is UvrABC system protein C, found in Lactiplantibacillus plantarum (strain ATCC BAA-793 / NCIMB 8826 / WCFS1) (Lactobacillus plantarum).